A 611-amino-acid chain; its full sequence is UPF0508 protein SCY_3114 (611 aa).

It belongs to the UPF0508 family.

This is UPF0508 protein SCY_3114 from Saccharomyces cerevisiae (strain YJM789) (Baker's yeast).